The sequence spans 278 residues: Putative protein-disulfide oxidoreductase RF_0032 (278 aa).

Positions M1–S18 are cleaved as a signal peptide. Residues V62–P84 form a disordered region. Polar residues predominate over residues N65–Q81. Residues P77–E266 enclose the Thioredoxin domain. A disulfide bridge connects residues C119 and C122.

It belongs to the thioredoxin family. DsbA subfamily.

Its subcellular location is the periplasm. Functionally, may be required for disulfide bond formation in some proteins. This is Putative protein-disulfide oxidoreductase RF_0032 from Rickettsia felis (strain ATCC VR-1525 / URRWXCal2) (Rickettsia azadi).